A 383-amino-acid polypeptide reads, in one-letter code: Homeobox protein knotted-1-like 5 (383 aa).

Disordered regions lie at residues 1–35 and 52–73; these read MSFN…HFSE and TTAD…ADTN. The region spanning 281–301 is the ELK domain; the sequence is ELKHELKQGFKEKIVDIREEI. Positions 302-365 form a DNA-binding region, homeobox; TALE-type; the sequence is MRKRRAGKLP…NQRKRNWNSN (64 aa). Residues 361-383 form a disordered region; that stretch reads NWNSNSSTSSTLTKNKRKRTGKS. Low complexity predominate over residues 362-373; that stretch reads WNSNSSTSSTLT. A compositionally biased stretch (basic residues) spans 374 to 383; it reads KNKRKRTGKS.

This sequence belongs to the TALE/KNOX homeobox family. As to quaternary structure, may form heterodimeric complex with the TALE/BELL protein BEL1, BLH1 and BLH2. Interacts with OFP1, OFP2, OFP3 and OFP4.

Its subcellular location is the nucleus. The sequence is that of Homeobox protein knotted-1-like 5 (KNAT5) from Arabidopsis thaliana (Mouse-ear cress).